Here is a 324-residue protein sequence, read N- to C-terminus: IDS-like terpene synthase 1 (324 aa).

Asp77 and Asp81 together coordinate Mg(2+).

This sequence belongs to the FPP/GGPP synthase family. Requires Mg(2+) as cofactor.

It carries out the reaction (2E)-geranyl diphosphate = (E)-beta-ocimene + diphosphate. The catalysed reaction is (2E)-geranyl diphosphate + H2O = linalool + diphosphate. The enzyme catalyses (2E,6E)-farnesyl diphosphate = (3E,6E)-alpha-farnesene + diphosphate. It catalyses the reaction (2E,6E,10E)-geranylgeranyl diphosphate = (E,E,E)-alpha-springene + diphosphate. Terpene synthase that shows monoterpene synthase activity and produces (E)-beta-ocimene as a major product and linalool as a minor product, using geranyl diphosphate (GPP) as substrate. Also shows sesquiterpene synthase activity as it is able to convert farnesyl diphosphate (FPP) into (E,E)-alpha-farnesene. Finally, TPS1 can convert geranylgeranyl diphosphate into (E,E,E)-alpha-springene. The sequence is that of IDS-like terpene synthase 1 from Melampsora larici-populina (strain 98AG31 / pathotype 3-4-7) (Poplar leaf rust fungus).